The chain runs to 361 residues: Phospho-N-acetylmuramoyl-pentapeptide-transferase (361 aa).

A run of 10 helical transmembrane segments spans residues T25 to D45, T71 to A91, L94 to Y114, W133 to G153, V169 to G189, G200 to A220, L240 to P260, I264 to A284, I289 to V309, and Q338 to L358.

The protein belongs to the glycosyltransferase 4 family. MraY subfamily. Mg(2+) is required as a cofactor.

It is found in the cell inner membrane. The catalysed reaction is UDP-N-acetyl-alpha-D-muramoyl-L-alanyl-gamma-D-glutamyl-meso-2,6-diaminopimeloyl-D-alanyl-D-alanine + di-trans,octa-cis-undecaprenyl phosphate = di-trans,octa-cis-undecaprenyl diphospho-N-acetyl-alpha-D-muramoyl-L-alanyl-D-glutamyl-meso-2,6-diaminopimeloyl-D-alanyl-D-alanine + UMP. It participates in cell wall biogenesis; peptidoglycan biosynthesis. In terms of biological role, catalyzes the initial step of the lipid cycle reactions in the biosynthesis of the cell wall peptidoglycan: transfers peptidoglycan precursor phospho-MurNAc-pentapeptide from UDP-MurNAc-pentapeptide onto the lipid carrier undecaprenyl phosphate, yielding undecaprenyl-pyrophosphoryl-MurNAc-pentapeptide, known as lipid I. The sequence is that of Phospho-N-acetylmuramoyl-pentapeptide-transferase from Rhodopseudomonas palustris (strain BisB18).